We begin with the raw amino-acid sequence, 194 residues long: NADH-quinone oxidoreductase subunit B (194 aa).

The segment covering 1-11 (MGMSQNNSTLV) has biased composition (polar residues). The segment at 1-22 (MGMSQNNSTLVAPQPKGIIDPA) is disordered. The [4Fe-4S] cluster site is built by cysteine 72, cysteine 73, cysteine 138, and cysteine 168.

Belongs to the complex I 20 kDa subunit family. NDH-1 is composed of 14 different subunits. Subunits NuoB, C, D, E, F, and G constitute the peripheral sector of the complex. The cofactor is [4Fe-4S] cluster.

The protein resides in the cell inner membrane. The catalysed reaction is a quinone + NADH + 5 H(+)(in) = a quinol + NAD(+) + 4 H(+)(out). Its function is as follows. NDH-1 shuttles electrons from NADH, via FMN and iron-sulfur (Fe-S) centers, to quinones in the respiratory chain. The immediate electron acceptor for the enzyme in this species is believed to be ubiquinone. Couples the redox reaction to proton translocation (for every two electrons transferred, four hydrogen ions are translocated across the cytoplasmic membrane), and thus conserves the redox energy in a proton gradient. This Agrobacterium fabrum (strain C58 / ATCC 33970) (Agrobacterium tumefaciens (strain C58)) protein is NADH-quinone oxidoreductase subunit B.